Here is a 742-residue protein sequence, read N- to C-terminus: Probable LRR receptor-like serine/threonine-protein kinase At2g02780 (742 aa).

Positions methionine 1–serine 25 are cleaved as a signal peptide. The Extracellular segment spans residues glutamate 26–leucine 354. 9 LRR repeats span residues histidine 74–lysine 96, leucine 104–lysine 128, serine 130–leucine 154, asparagine 156–glycine 177, leucine 178–threonine 204, serine 206–leucine 223, asparagine 224–isoleucine 247, serine 249–serine 271, and lysine 273–serine 294. N-linked (GlcNAc...) asparagine glycosylation is present at asparagine 85. Asparagine 137 carries N-linked (GlcNAc...) asparagine glycosylation. Asparagine 209 carries N-linked (GlcNAc...) asparagine glycosylation. An N-linked (GlcNAc...) asparagine glycan is attached at asparagine 266. Asparagine 299 is a glycosylation site (N-linked (GlcNAc...) asparagine). Residues valine 355 to isoleucine 375 form a helical membrane-spanning segment. Topologically, residues alanine 376–glutamate 742 are cytoplasmic. Positions aspartate 386 to proline 424 are disordered. Polar residues predominate over residues valine 406–leucine 417. The Protein kinase domain occupies threonine 426 to isoleucine 720.

The protein belongs to the protein kinase superfamily. Ser/Thr protein kinase family.

It is found in the membrane. The enzyme catalyses L-seryl-[protein] + ATP = O-phospho-L-seryl-[protein] + ADP + H(+). The catalysed reaction is L-threonyl-[protein] + ATP = O-phospho-L-threonyl-[protein] + ADP + H(+). The chain is Probable LRR receptor-like serine/threonine-protein kinase At2g02780 from Arabidopsis thaliana (Mouse-ear cress).